The primary structure comprises 197 residues: Carbohydrate-binding X8 domain-containing protein (197 aa).

The first 19 residues, 1-19, serve as a signal peptide directing secretion; the sequence is MAVLLPLFLLSFMFTYSNA. A compositionally biased stretch (low complexity) spans 101 to 113; the sequence is SCLSSSSSNGTPT. Residues 101–176 are disordered; it reads SCLSSSSSNG…TSGDPNGGEE (76 aa). The segment covering 116 to 125 has biased composition (polar residues); it reads YPSTGNSTTA. Residues 126 to 145 show a composition bias toward low complexity; sequence SPGTTNPSTGNSTNSTLPTN. The span at 146–155 shows a compositional bias: polar residues; sequence DKPTSSTITF. Residues 156 to 170 are compositionally biased toward low complexity; that stretch reads PDSTTMGPSSSTSGD. A lipid anchor (GPI-anchor amidated asparagine) is attached at Asn172. Positions 173–197 are cleaved as a propeptide — removed in mature form; sequence GGEELSVRTTTIILLTTIAAVALRV.

As to expression, expressed in the sieve elements.

The protein localises to the cell membrane. The sequence is that of Carbohydrate-binding X8 domain-containing protein from Arabidopsis thaliana (Mouse-ear cress).